We begin with the raw amino-acid sequence, 289 residues long: D-alanine aminotransferase (289 aa).

Tyr31 is a substrate binding site. Arg50 contacts pyridoxal 5'-phosphate. Positions 99 and 101 each coordinate substrate. Lys147 is modified (N6-(pyridoxal phosphate)lysine). A pyridoxal 5'-phosphate-binding site is contributed by Glu179.

This sequence belongs to the class-IV pyridoxal-phosphate-dependent aminotransferase family. As to quaternary structure, homodimer. Pyridoxal 5'-phosphate serves as cofactor.

It catalyses the reaction D-alanine + 2-oxoglutarate = D-glutamate + pyruvate. Its function is as follows. Acts on the D-isomers of alanine, leucine, aspartate, glutamate, aminobutyrate, norvaline and asparagine. The enzyme transfers an amino group from a substrate D-amino acid to the pyridoxal phosphate cofactor to form pyridoxamine and an alpha-keto acid in the first half-reaction. The second half-reaction is the reverse of the first, transferring the amino group from the pyridoxamine to a second alpha-keto acid to form the product D-amino acid via a ping-pong mechanism. This is an important process in the formation of D-alanine and D-glutamate, which are essential bacterial cell wall components. The protein is D-alanine aminotransferase (dat) of Listeria monocytogenes serotype 1/2a (strain 10403S).